Consider the following 374-residue polypeptide: Putative zinc finger MYND domain-containing protein R331 (374 aa).

Zn(2+) is bound by residues C328, C331, C341, C344, C350, C354, H362, and C366. The segment at C328–C366 adopts an MYND-type zinc-finger fold.

The polypeptide is Putative zinc finger MYND domain-containing protein R331 (Acanthamoeba polyphaga (Amoeba)).